The following is a 599-amino-acid chain: Elongation factor 4 (599 aa).

In terms of domain architecture, tr-type G spans 5–187 (SHIRNFSIIA…RLVHTIPAPV (183 aa)). Residues 17–22 (DHGKST) and 134–137 (NKMD) contribute to the GTP site.

The protein belongs to the TRAFAC class translation factor GTPase superfamily. Classic translation factor GTPase family. LepA subfamily.

The protein resides in the cell inner membrane. The catalysed reaction is GTP + H2O = GDP + phosphate + H(+). Its function is as follows. Required for accurate and efficient protein synthesis under certain stress conditions. May act as a fidelity factor of the translation reaction, by catalyzing a one-codon backward translocation of tRNAs on improperly translocated ribosomes. Back-translocation proceeds from a post-translocation (POST) complex to a pre-translocation (PRE) complex, thus giving elongation factor G a second chance to translocate the tRNAs correctly. Binds to ribosomes in a GTP-dependent manner. This chain is Elongation factor 4, found in Pseudomonas putida (strain W619).